Consider the following 89-residue polypeptide: Small ribosomal subunit protein uS15 (89 aa).

The protein belongs to the universal ribosomal protein uS15 family. In terms of assembly, part of the 30S ribosomal subunit. Forms a bridge to the 50S subunit in the 70S ribosome, contacting the 23S rRNA.

In terms of biological role, one of the primary rRNA binding proteins, it binds directly to 16S rRNA where it helps nucleate assembly of the platform of the 30S subunit by binding and bridging several RNA helices of the 16S rRNA. Its function is as follows. Forms an intersubunit bridge (bridge B4) with the 23S rRNA of the 50S subunit in the ribosome. The chain is Small ribosomal subunit protein uS15 from Chromohalobacter salexigens (strain ATCC BAA-138 / DSM 3043 / CIP 106854 / NCIMB 13768 / 1H11).